The following is a 239-amino-acid chain: NAD(P)H-hydrate epimerase (239 aa).

The 207-residue stretch at Ala-14–Ile-220 folds into the YjeF N-terminal domain. Residue Asn-64–Asp-68 coordinates (6S)-NADPHX. K(+) is bound by residues Asn-65 and Asp-126. (6S)-NADPHX contacts are provided by residues Gly-130 to Glu-136 and Asp-159. Ser-162 lines the K(+) pocket.

The protein belongs to the NnrE/AIBP family. K(+) serves as cofactor.

The protein localises to the cytoplasm. Its subcellular location is the mitochondrion. The catalysed reaction is (6R)-NADHX = (6S)-NADHX. It carries out the reaction (6R)-NADPHX = (6S)-NADPHX. Functionally, catalyzes the epimerization of the S- and R-forms of NAD(P)HX, a damaged form of NAD(P)H that is a result of enzymatic or heat-dependent hydration. This is a prerequisite for the S-specific NAD(P)H-hydrate dehydratase to allow the repair of both epimers of NAD(P)HX. The sequence is that of NAD(P)H-hydrate epimerase from Phaeosphaeria nodorum (strain SN15 / ATCC MYA-4574 / FGSC 10173) (Glume blotch fungus).